Consider the following 526-residue polypeptide: Fatty-acid amide hydrolase 2-B (526 aa).

A helical membrane pass occupies residues 12–32 (CLLVLVSGLFLALFRLLSPGT). Catalysis depends on charge relay system residues lysine 128 and serine 203. The active-site Acyl-ester intermediate is the serine 227.

This sequence belongs to the amidase family.

The protein resides in the membrane. The catalysed reaction is N-(5Z,8Z,11Z,14Z-eicosatetraenoyl)-ethanolamine + H2O = ethanolamine + (5Z,8Z,11Z,14Z)-eicosatetraenoate. The enzyme catalyses (9Z)-octadecenamide + H2O = (9Z)-octadecenoate + NH4(+). In Danio rerio (Zebrafish), this protein is Fatty-acid amide hydrolase 2-B (faah2b).